A 378-amino-acid polypeptide reads, in one-letter code: Formate dehydrogenase 2, mitochondrial (378 aa).

The N-terminal 18 residues, 1-18 (MAMWRAPSAAGQLLGRAL), are a transit peptide targeting the mitochondrion. Substrate is bound by residues valine 122 and asparagine 146. NAD(+) contacts are provided by residues threonine 147, 201–202 (RI), aspartate 221, 256–260 (PLTEK), asparagine 282, aspartate 308, and 332–335 (HCSG).

Belongs to the D-isomer specific 2-hydroxyacid dehydrogenase family. FDH subfamily. As to quaternary structure, homodimer.

The protein localises to the mitochondrion. The enzyme catalyses formate + NAD(+) = CO2 + NADH. Catalyzes the NAD(+)-dependent oxidation of formate to carbon dioxide. Involved in the cell stress response. The chain is Formate dehydrogenase 2, mitochondrial from Oryza sativa subsp. japonica (Rice).